The sequence spans 167 residues: MTTAFYPGSFDPMTNGHLDVLVQALNVASKVIVAIGIHPGKKPLFSFEERAELINRSLADALPKKAADISVVSFDNLVVDAARKHGASLLVRGLRDGTDLDYEMQMAGMNRQMAPDIQTLFLPAGTASRPITATLVRQIASMGGNVSAFVPPAVLEALTGKLKDPAK.

Residue S9 coordinates substrate. ATP contacts are provided by residues 9-10 and H17; that span reads SF. 3 residues coordinate substrate: K41, V78, and R92. ATP-binding positions include 93–95, E103, and 128–134; these read GLR and SRPITAT.

This sequence belongs to the bacterial CoaD family. As to quaternary structure, homohexamer. The cofactor is Mg(2+).

The protein resides in the cytoplasm. The enzyme catalyses (R)-4'-phosphopantetheine + ATP + H(+) = 3'-dephospho-CoA + diphosphate. The protein operates within cofactor biosynthesis; coenzyme A biosynthesis; CoA from (R)-pantothenate: step 4/5. Its function is as follows. Reversibly transfers an adenylyl group from ATP to 4'-phosphopantetheine, yielding dephospho-CoA (dPCoA) and pyrophosphate. This chain is Phosphopantetheine adenylyltransferase, found in Rhizobium rhizogenes (strain K84 / ATCC BAA-868) (Agrobacterium radiobacter).